Consider the following 448-residue polypeptide: Probable glycine dehydrogenase (decarboxylating) subunit 1 (448 aa).

It belongs to the GcvP family. N-terminal subunit subfamily. The glycine cleavage system is composed of four proteins: P, T, L and H. In this organism, the P 'protein' is a heterodimer of two subunits.

The enzyme catalyses N(6)-[(R)-lipoyl]-L-lysyl-[glycine-cleavage complex H protein] + glycine + H(+) = N(6)-[(R)-S(8)-aminomethyldihydrolipoyl]-L-lysyl-[glycine-cleavage complex H protein] + CO2. Its function is as follows. The glycine cleavage system catalyzes the degradation of glycine. The P protein binds the alpha-amino group of glycine through its pyridoxal phosphate cofactor; CO(2) is released and the remaining methylamine moiety is then transferred to the lipoamide cofactor of the H protein. This Staphylococcus epidermidis (strain ATCC 35984 / DSM 28319 / BCRC 17069 / CCUG 31568 / BM 3577 / RP62A) protein is Probable glycine dehydrogenase (decarboxylating) subunit 1.